Consider the following 288-residue polypeptide: 4-hydroxy-tetrahydrodipicolinate synthase (288 aa).

Residue Thr-42 coordinates pyruvate. Tyr-129 (proton donor/acceptor) is an active-site residue. Lys-157 acts as the Schiff-base intermediate with substrate in catalysis. A pyruvate-binding site is contributed by Ile-198.

The protein belongs to the DapA family. As to quaternary structure, homotetramer; dimer of dimers.

It is found in the cytoplasm. It carries out the reaction L-aspartate 4-semialdehyde + pyruvate = (2S,4S)-4-hydroxy-2,3,4,5-tetrahydrodipicolinate + H2O + H(+). The protein operates within amino-acid biosynthesis; L-lysine biosynthesis via DAP pathway; (S)-tetrahydrodipicolinate from L-aspartate: step 3/4. Functionally, catalyzes the condensation of (S)-aspartate-beta-semialdehyde [(S)-ASA] and pyruvate to 4-hydroxy-tetrahydrodipicolinate (HTPA). This chain is 4-hydroxy-tetrahydrodipicolinate synthase, found in Chlamydia abortus (strain DSM 27085 / S26/3) (Chlamydophila abortus).